The sequence spans 283 residues: 4-diphosphocytidyl-2-C-methyl-D-erythritol kinase (283 aa).

The active site involves Lys10. Pro99–Ser109 provides a ligand contact to ATP. Residue Asp141 is part of the active site.

It belongs to the GHMP kinase family. IspE subfamily. Homodimer.

It catalyses the reaction 4-CDP-2-C-methyl-D-erythritol + ATP = 4-CDP-2-C-methyl-D-erythritol 2-phosphate + ADP + H(+). It functions in the pathway isoprenoid biosynthesis; isopentenyl diphosphate biosynthesis via DXP pathway; isopentenyl diphosphate from 1-deoxy-D-xylulose 5-phosphate: step 3/6. Catalyzes the phosphorylation of the position 2 hydroxy group of 4-diphosphocytidyl-2C-methyl-D-erythritol. The protein is 4-diphosphocytidyl-2-C-methyl-D-erythritol kinase of Escherichia coli O127:H6 (strain E2348/69 / EPEC).